Here is a 495-residue protein sequence, read N- to C-terminus: Potassium voltage-gated channel subfamily A member 1 (495 aa).

Residues 1-30 (MTVMSGENVDEASAAPGHPQDGSYPRQADH) are disordered. Residues 1–128 (MTVMSGENVD…FYELGEEAME (128 aa)) are tetramerization domain. Residues 1–164 (MTVMSGENVD…LLFEYPESSG (164 aa)) are Cytoplasmic-facing. Ser23 bears the Phosphoserine mark. A helical transmembrane segment spans residues 165-186 (PARVIAIVSVMVILISIVIFCL). Residues 187 to 220 (ETLPELKDDKDFTGTVHRIDNTTVIYNSNIFTDP) are Extracellular-facing. Asn207 carries N-linked (GlcNAc...) asparagine glycosylation. The chain crosses the membrane as a helical span at residues 221-242 (FFIVETLCIIWFSFELVVRFFA). Cys243 carries S-palmitoyl cysteine lipidation. Residues 243–253 (CPSKTDFFKNI) are Cytoplasmic-facing. A helical membrane pass occupies residues 254–274 (MNFIDIVAIIPYFITLGTEIA). The Extracellular segment spans residues 275–287 (EQEGNQKGEQATS). Residues 288 to 308 (LAILRVIRLVRVFRIFKLSRH) traverse the membrane as a helical; Voltage-sensor segment. The Cytoplasmic portion of the chain corresponds to 309 to 323 (SKGLQILGQTLKASM). Positions 310–323 (KGLQILGQTLKASM) are S4-S5 linker. A Phosphoserine; by PKA modification is found at Ser322. Residues 324–345 (RELGLLIFFLFIGVILFSSAVY) form a helical membrane-spanning segment. Topologically, residues 346 to 359 (FAEAEEAESHFSSI) are extracellular. Positions 360-371 (PDAFWWAVVSMT) form an intramembrane region, helical. The Selectivity filter signature appears at 372–377 (TVGYGD). The stretch at 372 to 379 (TVGYGDMY) is an intramembrane region. Over 380-386 (PVTIGGK) the chain is Extracellular. The chain crosses the membrane as a helical span at residues 387 to 415 (IVGSLCAIAGVLTIALPVPVIVSNFNYFY). The Cytoplasmic portion of the chain corresponds to 416 to 495 (HRETEGEEQA…VNKSKLLTDV (80 aa)). Ser437 and Ser439 each carry phosphoserine. Ser446 bears the Phosphoserine; by PKA mark. The short motif at 493 to 495 (TDV) is the PDZ-binding element.

The protein belongs to the potassium channel family. A (Shaker) (TC 1.A.1.2) subfamily. Kv1.1/KCNA1 sub-subfamily. In terms of assembly, homotetramer and heterotetramer with other channel-forming alpha subunits, such as KCNA2, KCNA4, KCNA5, KCNA6 and KCNA7. Channel activity is regulated by interaction with the beta subunits KCNAB1 and KCNAB2. Identified in a complex with KCNA2 and KCNAB2. Interacts (via C-terminus) with the PDZ domains of DLG1, DLG2 and DLG4. Interacts with LGI1 within a complex containing LGI1, KCNA4 and KCNAB1. Interacts (via N-terminus) with STX1A; this promotes channel inactivation. Interacts (via N-terminus) with the heterodimer formed by GNB1 and GNG2; this promotes channel inactivation. Can interact simultaneously with STX1A and the heterodimer formed by GNB1 and GNG2. Interacts (via cytoplasmic N-terminal domain) with KCNRG; this inhibits channel activity. Interacts with ANK3; this inhibits channel activity. Interacts with ADAM11. N-glycosylated. Post-translationally, palmitoylated on Cys-243; which may be required for membrane targeting. In terms of processing, phosphorylated on tyrosine residues. Phosphorylation increases in response to NRG1; this inhibits channel activity. Phosphorylation at Ser-446 regulates channel activity by down-regulating expression at the cell membrane. In terms of tissue distribution, detected adjacent to nodes of Ranvier in juxtaparanodal zones in spinal cord nerve fibers, but also in paranodal regions in some myelinated spinal cord axons (at protein level). Detected in the islet of Langerhans.

The protein resides in the cell membrane. The protein localises to the membrane. It localises to the cell projection. It is found in the axon. Its subcellular location is the cytoplasmic vesicle. The protein resides in the perikaryon. The protein localises to the endoplasmic reticulum. It localises to the dendrite. It is found in the cell junction. Its subcellular location is the synapse. The protein resides in the presynaptic cell membrane. The protein localises to the presynapse. The enzyme catalyses K(+)(in) = K(+)(out). With respect to regulation, inhibited by 1.1 mM 4-aminopyridine (4-AP) and by 20 mM tetraethylammonium (TEA), but not by charybdotoxin (CTX). Inhibited by dendrotoxin (DTX). Its function is as follows. Voltage-gated potassium channel that mediates transmembrane potassium transport in excitable membranes, primarily in the brain and the central nervous system, but also in the kidney. Contributes to the regulation of the membrane potential and nerve signaling, and prevents neuronal hyperexcitability. Forms tetrameric potassium-selective channels through which potassium ions pass in accordance with their electrochemical gradient. The channel alternates between opened and closed conformations in response to the voltage difference across the membrane. Can form functional homotetrameric channels and heterotetrameric channels that contain variable proportions of KCNA1, KCNA2, KCNA4, KCNA5, KCNA6, KCNA7, and possibly other family members as well; channel properties depend on the type of alpha subunits that are part of the channel. Channel properties are modulated by cytoplasmic beta subunits that regulate the subcellular location of the alpha subunits and promote rapid inactivation of delayed rectifier potassium channels. In vivo, membranes probably contain a mixture of heteromeric potassium channel complexes, making it difficult to assign currents observed in intact tissues to any particular potassium channel family member. Homotetrameric KCNA1 forms a delayed-rectifier potassium channel that opens in response to membrane depolarization, followed by slow spontaneous channel closure. In contrast, a heterotetrameric channel formed by KCNA1 and KCNA4 shows rapid inactivation. Regulates neuronal excitability in hippocampus, especially in mossy fibers and medial perforant path axons, preventing neuronal hyperexcitability. Response to toxins that are selective for KCNA1, respectively for KCNA2, suggests that heteromeric potassium channels composed of both KCNA1 and KCNA2 play a role in pacemaking and regulate the output of deep cerebellar nuclear neurons. May function as down-stream effector for G protein-coupled receptors and inhibit GABAergic inputs to basolateral amygdala neurons. May contribute to the regulation of neurotransmitter release, such as gamma-aminobutyric acid (GABA) release. Plays a role in regulating the generation of action potentials and preventing hyperexcitability in myelinated axons of the vagus nerve, and thereby contributes to the regulation of heart contraction. Required for normal neuromuscular responses. Regulates the frequency of neuronal action potential firing in response to mechanical stimuli, and plays a role in the perception of pain caused by mechanical stimuli, but does not play a role in the perception of pain due to heat stimuli. Required for normal responses to auditory stimuli and precise location of sound sources, but not for sound perception. The use of toxins that block specific channels suggest that it contributes to the regulation of the axonal release of the neurotransmitter dopamine. Required for normal postnatal brain development and normal proliferation of neuronal precursor cells in the brain. Plays a role in the reabsorption of Mg(2+) in the distal convoluted tubules in the kidney and in magnesium ion homeostasis, probably via its effect on the membrane potential. This Homo sapiens (Human) protein is Potassium voltage-gated channel subfamily A member 1.